We begin with the raw amino-acid sequence, 3034 residues long: Cadherin EGF LAG seven-pass G-type receptor 1 (3034 aa).

The first 29 residues, 1-29, serve as a signal peptide directing secretion; that stretch reads MAPSSPRVLPALVLLAAAALPALELGAAA. Over 30–2484 the chain is Extracellular; it reads WELRVPGGAR…REHGEVLPLK (2455 aa). Over residues 222–243 the composition is skewed to low complexity; that stretch reads GTPSESPSVSPSLLNLSQPRAG. The segment at 222–267 is disordered; it reads GTPSESPSVSPSLLNLSQPRAGVVRRSRRGTGSSTSPQFPLPSYQV. Asparagine 236 carries N-linked (GlcNAc...) asparagine glycosylation. Cadherin domains are found at residues 261 to 368, 369 to 474, 475 to 580, 581 to 702, 703 to 804, 805 to 907, 908 to 1014, 1015 to 1116, and 1121 to 1239; these read PLPS…SPVF, EQSE…YPQF, SEKR…APIF, VSSP…DPMF, TQPV…RPVF, QSSH…APRF, LRDF…PPVF, EKDE…PPEL, and ILFN…SPLL. N-linked (GlcNAc...) asparagine glycans are attached at residues asparagine 561, asparagine 649, and asparagine 793. N-linked (GlcNAc...) asparagine glycosylation is found at asparagine 1129, asparagine 1154, asparagine 1228, asparagine 1264, asparagine 1274, and asparagine 1302. The EGF-like 1; calcium-binding domain maps to 1318–1376; the sequence is DDNICLREPCENYMKCVSVLRFDSSAPFISSTTVLFRPIHPITGLRCRCPPGFTGDYCE. 9 cysteine pairs are disulfide-bonded: cysteine 1322/cysteine 1333, cysteine 1327/cysteine 1364, cysteine 1366/cysteine 1375, cysteine 1382/cysteine 1393, cysteine 1387/cysteine 1402, cysteine 1404/cysteine 1413, cysteine 1422/cysteine 1433, cysteine 1427/cysteine 1443, and cysteine 1445/cysteine 1455. One can recognise an EGF-like 2; calcium-binding domain in the interval 1378–1414; sequence EIDLCYSNPCGANGRCRSREGGYTCECFEDFTGEHCQ. In terms of domain architecture, EGF-like 3; calcium-binding spans 1418-1456; the sequence is RSGRCASGVCKNGGTCVNLLIGGFHCVCPPGEYEHPYCE. Residues 1457–1661 enclose the Laminin G-like 1 domain; sequence VSTRSFPPQS…IANNGTRAGC (205 aa). N-linked (GlcNAc...) asparagine glycosylation is found at asparagine 1591, asparagine 1638, and asparagine 1655. 13 cysteine pairs are disulfide-bonded: cysteine 1635–cysteine 1661, cysteine 1668–cysteine 1679, cysteine 1673–cysteine 1688, cysteine 1690–cysteine 1699, cysteine 1855–cysteine 1885, cysteine 1891–cysteine 1902, cysteine 1896–cysteine 1911, cysteine 1913–cysteine 1922, cysteine 1926–cysteine 1937, cysteine 1931–cysteine 1949, cysteine 1951–cysteine 1960, cysteine 1968–cysteine 1981, and cysteine 1983–cysteine 1993. Residues 1664–1700 enclose the EGF-like 4; calcium-binding domain; the sequence is QRNFCDGTSCQNGGTCVNRWNTYLCECPLRFGGKNCE. Asparagine 1681 is subject to (3R)-3-hydroxyasparagine. The 182-residue stretch at 1704 to 1885 folds into the Laminin G-like 2 domain; sequence PHPQRFTGES…ALKVRVKDGC (182 aa). The EGF-like 5; calcium-binding domain maps to 1887-1922; that stretch reads VEDPCASSPCPPHSHCRDTWDSYSCICDRGYFGKKC. Position 1904 is a (3R)-3-hydroxyaspartate (aspartate 1904). One can recognise an EGF-like 6; calcium-binding domain in the interval 1923–1961; it reads VDACLLNPCKHVAACVRSPNTPRGYSCECGPGHYGQYCE. One can recognise an EGF-like 7; calcium-binding domain in the interval 1962–1994; that stretch reads NKVDLPCPKGWWGNPVCGPCHCAVSQGFDPDCN. Asparagine 1994 carries an N-linked (GlcNAc...) asparagine glycan. The EGF-like 8; calcium-binding domain occupies 1996–2031; that stretch reads TNGQCQCKENYYKPPAQDACLPCDCFPHGSHSRACD. 5 cysteine pairs are disulfide-bonded: cysteine 2000–cysteine 2015, cysteine 2002–cysteine 2018, cysteine 2020–cysteine 2030, cysteine 2039–cysteine 2048, and cysteine 2051–cysteine 2063. The region spanning 2018–2065 is the Laminin EGF-like domain; sequence CDCFPHGSHSRACDMDTGQCACKPGVIGRQCNRCDNPFAEVTSLGCEV. Residues asparagine 2118, asparagine 2137, asparagine 2144, asparagine 2155, asparagine 2160, and asparagine 2272 are each glycosylated (N-linked (GlcNAc...) asparagine). A disordered region spans residues 2295–2346; sequence SVSFPADTFKPPEKKEGPVVRLTNRRTTPLTAQPEPRAERETSSSRRRRHPD. The GAIN-B domain occupies 2312 to 2476; the sequence is PVVRLTNRRT…AVLMDISRRE (165 aa). Intrachain disulfides connect cysteine 2426–cysteine 2458 and cysteine 2446–cysteine 2460. Residues 2426 to 2476 are GPS; the sequence is CVFWNHSLDTGGTGGWSAKGCELLSRNRTHVTCQCSHSASCAVLMDISRRE. N-linked (GlcNAc...) asparagine glycans are attached at residues asparagine 2430 and asparagine 2452. A helical transmembrane segment spans residues 2485-2505; sequence IITYAALSLSLVALLVAFVLL. At 2506 to 2516 the chain is on the cytoplasmic side; sequence SLVRTLRSNLH. The helical transmembrane segment at 2517–2537 threads the bilayer; the sequence is SIHKNLITALFFSQLIFMVGI. An N-linked (GlcNAc...) asparagine glycan is attached at asparagine 2538. The Extracellular segment spans residues 2538–2542; sequence NQTEN. The chain crosses the membrane as a helical span at residues 2543-2563; the sequence is PFLCTVVAILLHYVSMGTFAW. The Cytoplasmic portion of the chain corresponds to 2564–2587; sequence TLVENLHVYRMLTEVRNIDTGPMR. A helical membrane pass occupies residues 2588-2608; the sequence is FYHVVGWGIPAIVTGLAVGLD. Topologically, residues 2609-2625 are extracellular; the sequence is PQGYGNPDFCWLSLQDT. The helical transmembrane segment at 2626-2646 threads the bilayer; it reads LIWSFAGPVGTVIIINTVIFV. Residues 2647-2670 are Cytoplasmic-facing; the sequence is LSAKVSCQRKHHYYERKGVVSMLR. Residues 2671-2691 traverse the membrane as a helical segment; sequence TAFLLLLLVTATWLLGLLAVN. Over 2692–2694 the chain is Extracellular; the sequence is SDT. The helical transmembrane segment at 2695–2715 threads the bilayer; sequence LSFHYLFAAFSCLQGIFVLLF. Over 2716 to 3034 the chain is Cytoplasmic; that stretch reads HCVAHREVRK…QANGSDSEKP (319 aa). Residues 2774 to 3034 form a disordered region; the sequence is TASLDSTTRD…QANGSDSEKP (261 aa). Phosphoserine occurs at positions 2776, 2779, 2886, and 2888. Basic and acidic residues predominate over residues 2893–2909; that stretch reads TEPHLKVETKVSVELHR. The segment covering 2976–2986 has biased composition (low complexity); the sequence is SPTSSRTSSLG. Residues 3003–3012 show a composition bias toward basic and acidic residues; the sequence is PRREPGREHL. Residues 3020–3034 are compositionally biased toward polar residues; sequence RTGSAQANGSDSEKP.

The protein belongs to the G-protein coupled receptor 2 family. LN-TM7 subfamily. In terms of processing, the iron and 2-oxoglutarate dependent 3-hydroxylation of aspartate and asparagine is (R) stereospecific within EGF domains. In terms of tissue distribution, expressed in the brain, where it is localized principally in the ependymal cell layer, choroid plexus and the area postrema. Also found in spinal cord and in the eye.

The protein localises to the cell membrane. In terms of biological role, receptor that may have an important role in cell/cell signaling during nervous system formation. This is Cadherin EGF LAG seven-pass G-type receptor 1 (Celsr1) from Mus musculus (Mouse).